A 345-amino-acid chain; its full sequence is Beta-2-glycoprotein 1 (345 aa).

The N-terminal stretch at 1–19 (MVSPVLALFSAFLCHVAIA) is a signal peptide. Sushi domains follow at residues 21–81 (RICP…RCVP), 82–139 (RVCP…ACAR), 140–202 (ITCP…ECLE), and 203–262 (VKCP…TCRE). 11 cysteine pairs are disulfide-bonded: C23-C66, C51-C79, C84-C124, C110-C137, C142-C188, C174-C200, C205-C248, C234-C260, C264-C315, C300-C325, and C307-C345. The O-linked (GalNAc...) threonine glycan is linked to T33. N-linked (GlcNAc...) asparagine glycans are attached at residues N105, N117, N162, N183, and N193. A sushi-like region spans residues 263 to 345 (SCKLPVKKAT…KTDASELTPC (83 aa)).

In terms of tissue distribution, expressed by the liver and secreted in plasma.

The protein localises to the secreted. Functionally, binds to various kinds of negatively charged substances such as heparin, phospholipids, and dextran sulfate. May prevent activation of the intrinsic blood coagulation cascade by binding to phospholipids on the surface of damaged cells. This chain is Beta-2-glycoprotein 1 (Apoh), found in Mus musculus (Mouse).